The primary structure comprises 318 residues: Methionyl-tRNA formyltransferase (318 aa).

110 to 113 contributes to the (6S)-5,6,7,8-tetrahydrofolate binding site; it reads SLLP.

It belongs to the Fmt family.

The catalysed reaction is L-methionyl-tRNA(fMet) + (6R)-10-formyltetrahydrofolate = N-formyl-L-methionyl-tRNA(fMet) + (6S)-5,6,7,8-tetrahydrofolate + H(+). Attaches a formyl group to the free amino group of methionyl-tRNA(fMet). The formyl group appears to play a dual role in the initiator identity of N-formylmethionyl-tRNA by promoting its recognition by IF2 and preventing the misappropriation of this tRNA by the elongation apparatus. This is Methionyl-tRNA formyltransferase from Geobacillus sp. (strain WCH70).